Here is a 399-residue protein sequence, read N- to C-terminus: Octopine dehydrogenase (399 aa).

NADH is bound by residues 10–13 (GGNG) and 35–38 (FADE). The pyruvate site is built by Q118 and T143. Q118 serves as a coordination point for substrate. Residue C148 coordinates NAD(+). Residue M206 participates in L-arginine binding. Pyruvate is bound at residue H212. H212 is an active-site residue. NAD(+) is bound at residue R324.

This sequence belongs to the lysopine/nopaline/octopine/opine/vitopine dehydrogenases family.

It catalyses the reaction D-octopine + NAD(+) + H2O = L-arginine + pyruvate + NADH + H(+). Its activity is regulated as follows. Agmatine acts as a competitive inhibitor of the condensation reaction where the L-arginine and agmatine substrates compete for the same site. In terms of biological role, catalyzes the reverse reaction of octopine dehydrogenation. Acts on L-arginine in preference to other substrates such as canavanine, cysteine, L-alanine, ornithine or norvaline, owing to the presence of the positively charged guanidium group. The sequence is that of Octopine dehydrogenase from Pecten maximus (King scallop).